The primary structure comprises 359 residues: Probable L-ascorbate peroxidase 7, chloroplastic (359 aa).

The transit peptide at 1–71 directs the protein to the chloroplast; it reads MAAQRLAALH…KAAGSGRSVM (71 aa). The active-site Proton acceptor is the H118. H247 contributes to the heme b binding site. T248 provides a ligand contact to K(+). The tract at residues 251-277 is disordered; it reads RSRPERSGWGKPETKYTKNGPGAPGGQ. Residues 252-266 show a composition bias toward basic and acidic residues; sequence SRPERSGWGKPETKY. Positions 280 and 287 each coordinate K(+).

The protein belongs to the peroxidase family. Ascorbate peroxidase subfamily. Requires heme b as cofactor. As to expression, expressed in roots, leaves, stems and flowers.

The protein resides in the plastid. The protein localises to the chloroplast stroma. It catalyses the reaction L-ascorbate + H2O2 = L-dehydroascorbate + 2 H2O. Plays a key role in hydrogen peroxide removal. This Oryza sativa subsp. japonica (Rice) protein is Probable L-ascorbate peroxidase 7, chloroplastic.